A 556-amino-acid chain; its full sequence is Delta-1-pyrroline-5-carboxylate dehydrogenase 12A1, mitochondrial (556 aa).

282–287 (GSSRVA) provides a ligand contact to NAD(+). E301 acts as the Proton acceptor in catalysis. The active-site Nucleophile is the C336.

It belongs to the aldehyde dehydrogenase family. Highly expressed in flowers. Constitutively expressed at low levels in the other tissues. Highly expressed in pollen grains and tissues undergoing cell death. Expressed in old leaves, mature siliques and developing embryos.

Its subcellular location is the mitochondrion matrix. It catalyses the reaction (S)-1-pyrroline-5-carboxylate + NAD(+) + 2 H2O = L-glutamate + NADH + H(+). The protein operates within amino-acid degradation; L-proline degradation into L-glutamate; L-glutamate from L-proline: step 2/2. Its function is as follows. Plays a role in the inhibition of programmed cell death by converting the toxic proline catabolism intermediate (s)-1-pyrroline-5-carboxylate (P5C) to glutamate. This chain is Delta-1-pyrroline-5-carboxylate dehydrogenase 12A1, mitochondrial, found in Arabidopsis thaliana (Mouse-ear cress).